The following is a 1089-amino-acid chain: Translocase of chloroplast 120, chloroplastic (1089 aa).

Gly-2 bears the N-acetylglycine mark. Disordered stretches follow at residues 158–179, 255–339, and 353–381; these read ATED…GVVS, TLSP…GLGR, and QPRV…EHDE. Over residues 165 to 176 the composition is skewed to polar residues; the sequence is ENGNTHSSSENG. Phosphoserine is present on residues Ser-179, Ser-263, and Ser-283. Residues 300–312 show a composition bias toward basic and acidic residues; it reads EIKESQHMERESE. The span at 327–339 shows a compositional bias: low complexity; sequence AALPPARPAGLGR. Residues 353–374 show a composition bias toward polar residues; that stretch reads QPRVNGNVSHNQPQQAEDSTTA. Residues 454–683 enclose the AIG1-type G domain; it reads DFSCTIMVLG…KLQDNIPGGQ (230 aa). Residues 463-470 form a G1 region; it reads GKSGVGKS. Residues 466 to 471 and 485 to 490 contribute to the GTP site; these read GVGKSA and DAFQVG. Ser-470 provides a ligand contact to Mg(2+). The segment at 485–488 is homodimerization; it reads DAFQ. The G2 stretch occupies residues 489 to 493; that stretch reads VGTKK. The interval 510–513 is G3; that stretch reads DTPG. Positions 548–553 are homodimerization; it reads RLDMQS. Residues 582–585 are G4; the sequence is THAA. GTP-binding positions include His-583 and 631-632; that span reads EN. Residues 631-633 are G5; that stretch reads ENH. Residues 710–748 are disordered; that stretch reads PEQQYDDEDDEDDLDESSDSEEESEYDELPPFKRLTKAE. Acidic residues predominate over residues 713-737; it reads QYDDEDDEDDLDESSDSEEESEYDE. The stretch at 767 to 788 forms a coiled coil; it reads REKLFMKRQMKEERKRRKLLKK. Residues 1064-1080 form a helical membrane-spanning segment; that stretch reads LAVVALVPLFKKLLTYY.

The protein belongs to the TRAFAC class TrmE-Era-EngA-EngB-Septin-like GTPase superfamily. AIG1/Toc34/Toc159-like paraseptin GTPase family. TOC159 subfamily. Homodimer. Part of the TOC core complex that includes 1 protein for the specific recognition of transit peptides surrounded by a ring composed of four proteins forming translocation channels, and four to five GTP-binding proteins providing energy. This core complex can interact with components of the TIC complex to form a larger import complex. Chloroplastic protein precursor such as prSS (precursor of the RuBisCO small subunit) interacts with these complexes. The TOC complex contains a specific subset of polar lipids such as digalactosyldiacylglyceride (DGDG), phosphatidylcholine (PC) and phosphatidylglycerol (PG). Mg(2+) serves as cofactor. Post-translationally, phosphorylated by KOC1. Expressed in seedlings, flowers, and roots.

It is found in the plastid. The protein localises to the chloroplast outer membrane. It localises to the cytoplasm. GTPase involved in protein precursor import into chloroplasts. Seems to recognize chloroplast-destined precursor proteins and regulate their presentation to the translocation channel through GTP hydrolysis. Probably specialized in the import of nuclear encoded non-photosynthetic preproteins from the cytoplasm to the chloroplast. In Arabidopsis thaliana (Mouse-ear cress), this protein is Translocase of chloroplast 120, chloroplastic.